The chain runs to 195 residues: MKQKIVLATGNKGKVKEMADVLSDFGFEVIAQTDLGIESPEETGLTFVENALLKARYASEKSGLPAIADDSGLVVSALNGAPGLYSARYAGEEGNDAKNREKLLAELAHIAQEQRQAKFVSCIVFLQHPTDPSPIIAEGECCGVIGFEEKGENGFGYDSLFFSPEQGCTFAELETAEKKKISHRAKALSVLKSKL.

9-14 (TGNKGK) provides a ligand contact to substrate. Residues Glu-41 and Asp-70 each contribute to the Mg(2+) site. Asp-70 functions as the Proton acceptor in the catalytic mechanism. Residues Ser-71, 155–158 (FGYD), Lys-178, and 183–184 (HR) contribute to the substrate site.

It belongs to the HAM1 NTPase family. As to quaternary structure, homodimer. Mg(2+) is required as a cofactor.

The catalysed reaction is XTP + H2O = XMP + diphosphate + H(+). The enzyme catalyses dITP + H2O = dIMP + diphosphate + H(+). It catalyses the reaction ITP + H2O = IMP + diphosphate + H(+). In terms of biological role, pyrophosphatase that catalyzes the hydrolysis of nucleoside triphosphates to their monophosphate derivatives, with a high preference for the non-canonical purine nucleotides XTP (xanthosine triphosphate), dITP (deoxyinosine triphosphate) and ITP. Seems to function as a house-cleaning enzyme that removes non-canonical purine nucleotides from the nucleotide pool, thus preventing their incorporation into DNA/RNA and avoiding chromosomal lesions. The sequence is that of dITP/XTP pyrophosphatase from Haemophilus influenzae (strain ATCC 51907 / DSM 11121 / KW20 / Rd).